We begin with the raw amino-acid sequence, 154 residues long: Large ribosomal subunit protein uL22c (154 aa).

This sequence belongs to the universal ribosomal protein uL22 family. In terms of assembly, part of the 50S ribosomal subunit.

Its subcellular location is the plastid. It localises to the chloroplast. Its function is as follows. This protein binds specifically to 23S rRNA. Functionally, the globular domain of the protein is located near the polypeptide exit tunnel on the outside of the subunit, while an extended beta-hairpin is found that lines the wall of the exit tunnel in the center of the 70S ribosome. The protein is Large ribosomal subunit protein uL22c (rpl22) of Guizotia abyssinica (Niger).